The sequence spans 289 residues: Mitochondrial fission regulator 1-like (289 aa).

Threonine 27 is subject to Phosphothreonine. Phosphoserine occurs at positions 38, 100, 107, 221, 222, 235, 258, and 270.

The protein belongs to the MTFR1 family. In terms of processing, phosphorylated by AMPK. Upon stress, phosphorylation by AMPK is sufficient to induce mitochondrial fragmentation.

The protein localises to the mitochondrion outer membrane. Mitochondrial protein required for adaptation of miochondrial dynamics to metabolic changes. Regulates mitochondrial morphology at steady state and mediates AMPK-dependent stress-induced mitochondrial fragmentation via the control of OPA1 levels. This chain is Mitochondrial fission regulator 1-like (Mtfr1l), found in Rattus norvegicus (Rat).